The chain runs to 713 residues: F-box/WD repeat-containing protein 7 (713 aa).

The tract at residues Met-1–Thr-150 is disordered. Position 26 is a phosphoserine (Ser-26). Basic and acidic residues predominate over residues Arg-46–Arg-55. A compositionally biased stretch (polar residues) spans Gln-69–Phe-84. Residues Val-87–Asp-135 are compositionally biased toward acidic residues. Positions Asn-94–Asp-136 form a coiled coil. The span at Asp-136–His-145 shows a compositional bias: basic and acidic residues. Phosphothreonine is present on Thr-211. Ser-233 bears the Phosphoserine mark. In terms of domain architecture, F-box spans Arg-284–Lys-330. WD repeat units follow at residues Gly-384 to Val-424, His-426 to Thr-462, Gly-465 to Met-504, His-506 to Thr-542, Gly-545 to Thr-584, His-586 to Gln-624, and Lys-628 to Asn-665.

In terms of assembly, homodimer; homodimerization plays a role in substrate binding and/or ubiquitination and degradation. Component of the SCF(FBXW7) complex consisting of CUL1, RBX1, SKP1 and FBXW7. Interacts (via F-box domain) with SKP1. Interacts (via F-box domain) with pseudophosphatase STYX; the interaction is direct and prevents FBXW7 interaction with SKP1. Interacts with cyclin-E (CCNE1 or CCNE2). Interacts with PSEN1. Forms a trimeric complex with NOTCH1 and SGK1. Interacts with NOTCH1 intracellular domain/NICD and NOTCH4 intracellular domain/NICD. Interacts with NOTCH2 intracellular domain (N2ICD). Interacts with MYC (when phosphorylated). Interacts with USP28, counteracting ubiquitination of MYC. Interacts (when phosphorylated at Thr-211) with PIN1, disrupting FBXW7 dimerization and promoting FBXW7 autoubiquitination and degradation. Interacts with UBE2QL1. Interacts with FAM83D; promotes FBXW7 degradation. Interacts with MYCN; FBXW7 competes with AURKA for binding to unphosphorylated MYCN but not for binding to phosphorylated MYCN. Interacts with JUN. Found in a complex with JUN and PRR7. Interacts with JUN and PRR7; the interaction inhibits ubiquitination-mediated JUN degradation, promoting its phosphorylation and transcriptional activity. Interacts with NFE2L1. Interacts with NR1D1. Interacts with RICTOR; mediates RICTOR ubiquitination and degradation. In terms of processing, phosphorylation at Thr-211 promotes interaction with PIN1, leading to disrupt FBXW7 dimerization and promoting FBXW7 autoubiquitination and degradation. Phosphorylated by ATM at Ser-26 in response to DNA damage, promoting recruitment to DNA damage sites and 'Lys-63'-linked ubiquitination of phosphorylated XRCC4. Post-translationally, ubiquitinated: autoubiquitinates following phosphorylation at Thr-211 and subsequent interaction with PIN1. Ubiquitination leads to its degradation.

The protein localises to the nucleus. The protein resides in the nucleoplasm. It is found in the chromosome. The protein operates within protein modification; protein ubiquitination. In terms of biological role, substrate recognition component of a SCF (SKP1-CUL1-F-box protein) E3 ubiquitin-protein ligase complex which mediates the ubiquitination and subsequent proteasomal degradation of target proteins. Recognizes and binds phosphorylated sites/phosphodegrons within target proteins and thereafter brings them to the SCF complex for ubiquitination. Identified substrates include cyclin-E (CCNE1 or CCNE2), JUN, MYC, NOTCH1 released notch intracellular domain (NICD), NOTCH2, MCL1, MLST8, RICTOR and probably PSEN1. Acts as a negative regulator of JNK signaling by binding to phosphorylated JUN and promoting its ubiquitination and subsequent degradation. SCF(FBXW7) complex mediates the ubiquitination and subsequent degradation of NFE2L1. Involved in bone homeostasis and negative regulation of osteoclast differentiation. Regulates the amplitude of the cyclic expression of hepatic core clock genes and genes involved in lipid and glucose metabolism via ubiquitination and proteasomal degradation of their transcriptional repressor NR1D1; CDK1-dependent phosphorylation of NR1D1 is necessary for SCF(FBXW7)-mediated ubiquitination. Also able to promote 'Lys-63'-linked ubiquitination in response to DNA damage. The SCF(FBXW7) complex facilitates double-strand break repair following phosphorylation by ATM: phosphorylation promotes localization to sites of double-strand breaks and 'Lys-63'-linked ubiquitination of phosphorylated XRCC4, enhancing DNA non-homologous end joining. This is F-box/WD repeat-containing protein 7 from Rattus norvegicus (Rat).